A 244-amino-acid polypeptide reads, in one-letter code: Probable transcriptional regulatory protein DNO_1179 (244 aa).

This sequence belongs to the TACO1 family.

It localises to the cytoplasm. The protein is Probable transcriptional regulatory protein DNO_1179 of Dichelobacter nodosus (strain VCS1703A).